Reading from the N-terminus, the 513-residue chain is Ribonuclease Y (513 aa).

A helical membrane pass occupies residues 6–26 (YIIIAVVIIIICVILGLYVVD). The 86-residue stretch at 203–288 (TVHVVNLPND…EMVEKAKKEV (86 aa)) folds into the KH domain. One can recognise an HD domain in the interval 329–422 (VLKHSIEVSH…VQAADAISAA (94 aa)).

This sequence belongs to the RNase Y family.

Its subcellular location is the cell membrane. In terms of biological role, endoribonuclease that initiates mRNA decay. This Clostridium botulinum (strain Langeland / NCTC 10281 / Type F) protein is Ribonuclease Y.